Reading from the N-terminus, the 166-residue chain is Small ribosomal subunit protein bS18m (166 aa).

Residues 1–31 (MLGRRIFSPAPNRGFILCNLIQSNNSTRRGF) constitute a mitochondrion transit peptide. Positions 29 to 48 (RGFSDNRKFNERNSEASSNV) are disordered. A compositionally biased stretch (basic and acidic residues) spans 30 to 42 (GFSDNRKFNERNS).

It belongs to the bacterial ribosomal protein bS18 family. As to quaternary structure, component of the mitochondrial small ribosomal subunit (mt-SSU). Mature yeast 74S mitochondrial ribosomes consist of a small (37S) and a large (54S) subunit. The 37S small subunit contains a 15S ribosomal RNA (15S mt-rRNA) and at least 32 different proteins. The 54S large subunit contains a 21S rRNA (21S mt-rRNA) and at least 45 different proteins.

The protein resides in the mitochondrion. Its function is as follows. Component of the mitochondrial ribosome (mitoribosome), a dedicated translation machinery responsible for the synthesis of mitochondrial genome-encoded proteins, including at least some of the essential transmembrane subunits of the mitochondrial respiratory chain. The mitoribosomes are attached to the mitochondrial inner membrane and translation products are cotranslationally integrated into the membrane. The polypeptide is Small ribosomal subunit protein bS18m (rsm18) (Schizosaccharomyces pombe (strain 972 / ATCC 24843) (Fission yeast)).